A 103-amino-acid polypeptide reads, in one-letter code: Pyrimidine/purine nucleoside phosphorylase (103 aa).

Belongs to the nucleoside phosphorylase PpnP family.

The catalysed reaction is a purine D-ribonucleoside + phosphate = a purine nucleobase + alpha-D-ribose 1-phosphate. It catalyses the reaction adenosine + phosphate = alpha-D-ribose 1-phosphate + adenine. It carries out the reaction cytidine + phosphate = cytosine + alpha-D-ribose 1-phosphate. The enzyme catalyses guanosine + phosphate = alpha-D-ribose 1-phosphate + guanine. The catalysed reaction is inosine + phosphate = alpha-D-ribose 1-phosphate + hypoxanthine. It catalyses the reaction thymidine + phosphate = 2-deoxy-alpha-D-ribose 1-phosphate + thymine. It carries out the reaction uridine + phosphate = alpha-D-ribose 1-phosphate + uracil. The enzyme catalyses xanthosine + phosphate = alpha-D-ribose 1-phosphate + xanthine. Its function is as follows. Catalyzes the phosphorolysis of diverse nucleosides, yielding D-ribose 1-phosphate and the respective free bases. Can use uridine, adenosine, guanosine, cytidine, thymidine, inosine and xanthosine as substrates. Also catalyzes the reverse reactions. This chain is Pyrimidine/purine nucleoside phosphorylase, found in Citrifermentans bemidjiense (strain ATCC BAA-1014 / DSM 16622 / JCM 12645 / Bem) (Geobacter bemidjiensis).